Reading from the N-terminus, the 51-residue chain is Large ribosomal subunit protein eL39 (51 aa).

Belongs to the eukaryotic ribosomal protein eL39 family.

The sequence is that of Large ribosomal subunit protein eL39 from Pyrobaculum islandicum (strain DSM 4184 / JCM 9189 / GEO3).